The chain runs to 665 residues: MSQTSLHHARLDWNEAGTPVSSDFGDVYFSNDNGLSETRYVFLQQNGLPARFSHHNSDSFVIGETGFGTGLNFLATMKAFLEQAPQTGNGARLHFISFEKFPLTRDDLHKALTAWPELAPFSQALIAQWPLPVPGCHRLHFAGGRIRLDLWLGDIKEMLPQVPHGEQGLVDTWYLDGFAPAKNPEMWTQDLFDGLARLARPGATLSTFTSAGFVRRGLIAAGFAMKKVKGHGSKWAMLAGERVDKKPQRTIVPWYARPAGRDGEVVIIGGGIASAMTALSLVERGRKVTLLCEDHELATGASGNRQGALYPLLNGEHDALSRFYSLAFGYARQRLLSLAKHHPIAFDLCGVVQLGYDDKSTAKLAKMQQGPFPHALMRPLTPVEAEHECGLPSGHAGVSYPLGGWLCPADLTRAAIKEAQASGLLQVEYDCPVTAIHEQVDGWLVASREGRQWQAPNLVVAAGHQLPALSPFAELPLYPVRGQVSHVPTTATLSQLKTVLCYDGYLTPAHNAEHCIGASYGRNQSTQAFSAEEQAQNQARLQACLPDQAWPAEVDVSSNEARVGVRCASRDHLPVAGPIARLAGLADHYARLQRDQQNPAPLPLHPGLYVLGALGSRGLCSAPLCGELIASEICGDPLPLATDLLEALHPARYWIRKLLKGKPLN.

The tract at residues 1–243 (MSQTSLHHAR…KWAMLAGERV (243 aa)) is tRNA (mnm(5)s(2)U34)-methyltransferase. The tract at residues 268-665 (IGGGIASAMT…RKLLKGKPLN (398 aa)) is FAD-dependent cmnm(5)s(2)U34 oxidoreductase.

In the N-terminal section; belongs to the methyltransferase superfamily. tRNA (mnm(5)s(2)U34)-methyltransferase family. It in the C-terminal section; belongs to the DAO family. It depends on FAD as a cofactor.

It localises to the cytoplasm. The enzyme catalyses 5-aminomethyl-2-thiouridine(34) in tRNA + S-adenosyl-L-methionine = 5-methylaminomethyl-2-thiouridine(34) in tRNA + S-adenosyl-L-homocysteine + H(+). In terms of biological role, catalyzes the last two steps in the biosynthesis of 5-methylaminomethyl-2-thiouridine (mnm(5)s(2)U) at the wobble position (U34) in tRNA. Catalyzes the FAD-dependent demodification of cmnm(5)s(2)U34 to nm(5)s(2)U34, followed by the transfer of a methyl group from S-adenosyl-L-methionine to nm(5)s(2)U34, to form mnm(5)s(2)U34. In Aeromonas salmonicida (strain A449), this protein is tRNA 5-methylaminomethyl-2-thiouridine biosynthesis bifunctional protein MnmC.